A 483-amino-acid chain; its full sequence is Serine protease HTRA4 (483 aa).

The N-terminal stretch at 1 to 30 (MSFQRLWAVRTQFLLLWLLLPAVPVPWAEA) is a signal peptide. One can recognise an IGFBP N-terminal domain in the interval 35–113 (VSLPCPDACD…GAWLGTCGCA (79 aa)). 6 disulfides stabilise this stretch: cysteine 39/cysteine 65, cysteine 43/cysteine 67, cysteine 48/cysteine 68, cysteine 54/cysteine 71, cysteine 79/cysteine 93, and cysteine 87/cysteine 110. The segment at 208–368 (GSGFIVSEDG…IPSDRIRQFL (161 aa)) is serine protease. Catalysis depends on charge relay system residues histidine 224, aspartate 254, and serine 332. In terms of domain architecture, PDZ spans 379 to 471 (KAPLQKKYLG…LSIIVLRGSQ (93 aa)).

Belongs to the peptidase S1C family.

The protein resides in the secreted. Functionally, serine protease. The polypeptide is Serine protease HTRA4 (Htra4) (Mus musculus (Mouse)).